Here is a 1026-residue protein sequence, read N- to C-terminus: Multidrug resistance protein MdtC (1026 aa).

Helical transmembrane passes span 15-35 (ILIA…LPVA), 333-353 (EVEE…FLFL), 360-380 (LIPA…MYLC), 387-407 (LSLM…IVVL), 431-451 (VGFT…PLLL), 463-483 (FAVT…TLTP), 528-548 (LVGV…IAIP), 853-873 (LILI…LYES), 897-917 (LFNA…IGIV), 953-973 (PIMM…LSGG), and 984-1004 (ITIV…TPVV).

Belongs to the resistance-nodulation-cell division (RND) (TC 2.A.6) family. MdtC subfamily. Part of a tripartite efflux system composed of MdtA, MdtB and MdtC. MdtC forms a heteromultimer with MdtB.

It is found in the cell inner membrane. The polypeptide is Multidrug resistance protein MdtC (Salmonella gallinarum (strain 287/91 / NCTC 13346)).